The chain runs to 344 residues: Mitochondrial genome maintenance exonuclease 1 (344 aa).

Residues D238, D251, and K253 contribute to the active site. S343 is subject to Phosphoserine.

It belongs to the MGME1 family.

The protein localises to the mitochondrion. Functionally, metal-dependent single-stranded DNA (ssDNA) exonuclease involved in mitochondrial genome maintenance. Has preference for 5'-3' exonuclease activity but is also capable of endonuclease activity on linear substrates. Necessary for maintenance of proper 7S DNA levels. Probably involved in mitochondrial DNA (mtDNA) repair, possibly via the processing of displaced DNA containing Okazaki fragments during RNA-primed DNA synthesis on the lagging strand or via processing of DNA flaps during long-patch base excision repair. Specifically binds 5-hydroxymethylcytosine (5hmC)-containing DNA in stem cells. This Homo sapiens (Human) protein is Mitochondrial genome maintenance exonuclease 1.